A 1146-amino-acid chain; its full sequence is Large proline-rich protein BAG6 (1146 aa).

M1 is subject to N-acetylmethionine. One can recognise a Ubiquitin-like domain in the interval 17 to 92; the sequence is LEVLVKTLDS…HLVERAPPQT (76 aa). Disordered stretches follow at residues 87–128, 186–268, 381–436, 457–525, and 555–618; these read RAPP…HDRN, RGGT…HPSP, TMTG…TSHP, QDSG…QGAG, and PGMA…SAAD. Position 96 is a phosphoserine (S96). The span at 96 to 108 shows a compositional bias: low complexity; the sequence is SGASSGTGSASAT. Residues 109–122 are compositionally biased toward gly residues; sequence HGGGPLPGTRGPGA. The residue at position 117 (T117) is a Phosphothreonine. Residues 208 to 217 are compositionally biased toward polar residues; sequence VALNSQTSEP. 2 consecutive repeat copies span residues 236-265 and 410-438. The 4 X 29 AA approximate repeats stretch occupies residues 236 to 650; sequence RPPTQTPELP…LASPTITVAV (415 aa). A compositionally biased stretch (pro residues) spans 239 to 257; the sequence is TQTPELPPSGPAPAGPAPA. Over residues 394 to 413 the composition is skewed to low complexity; sequence GAEAASPGSGQASSLPPSSA. Composition is skewed to pro residues over residues 422 to 433 and 502 to 515; these read APPPGPAPPPAT and PTPPQARPSHPGGP. Low complexity-rich tracts occupy residues 555 to 573 and 583 to 601; these read PGMAPASASAPATAQAQAP and PATASASAGTTNTATTAGP. 2 consecutive repeat copies span residues 589–616 and 622–650. Positions 603–614 are enriched in pro residues; it reads PGGPAQPPPPQP. Disordered stretches follow at residues 666 to 711 and 961 to 1146; these read ASQA…ESLP and PQAL…ADDP. The segment covering 670–694 has biased composition (pro residues); that stretch reads APPPPPPPPPPPPAPEQQTTPPPGS. Positions 977–986 are enriched in basic and acidic residues; that stretch reads TSPEPQREDA. Phosphoserine is present on residues S978 and S987. Low complexity predominate over residues 1021–1034; it reads AEPWAAAVPPEWVP. Residues 1024 to 1054 are required for interaction with GET4; the sequence is WAAAVPPEWVPIIQQDIQSQRKVKPQPPLSD. Residues 1026-1068 carry the Nuclear localization site motif; it reads AAVPPEWVPIIQQDIQSQRKVKPQPPLSDAYLSGMPAKRRKTM. Residues 1036-1146 form a sufficient for the delivery of client proteins to the endoplasmic reticulum region; it reads IQQDIQSQRK…NAHRAFADDP (111 aa). T1067 carries the phosphothreonine modification. Residues 1072-1129 are BAG-similar domain, required and sufficient for interaction with UBL4A; it reads GPQLLLSEAVSRAAKAAGARPLTSPESLSRDLEAPEVQESYRQQLRSDIQKRLQEDPN. The segment covering 1080–1090 has biased composition (low complexity); sequence AVSRAAKAAGA. 2 positions are modified to phosphoserine: S1095 and S1131.

As to quaternary structure, component of the BAG6/BAT3 complex, also named BAT3 complex, at least composed of BAG6, UBL4A and GET4/TRC35. Interacts with GET4; the interaction is direct and localizes BAG6 in the cytosol. Interacts with UBL4A; the interaction is direct and required for UBL4A protein stability. Interacts with AIFM1. Interacts with HSPA2. Interacts with CTCFL. Interacts with p300/EP300. Interacts (via ubiquitin-like domain) with RNF126; required for BAG6-dependent ubiquitination of proteins mislocalized to the cytosol. Interacts (via ubiquitin-like domain) with SGTA; SGTA competes with RNF126 by binding the same region of BAG6, thereby promoting deubiquitination of BAG6-target proteins and rescuing them from degradation. Interacts with ricin A chain. Interacts with VCP and AMFR; both form the VCP/p97-AMFR/gp78 complex. Interacts with SYVN1. Interacts with USP13; the interaction is direct and may mediate UBL4A deubiquitination. Interacts with ZFAND2B. Interacts with KPNA2. Interacts with UBQLN4. Ricin can induce a cleavage by the caspase CASP3. The released C-terminal peptide induces apoptosis.

Its subcellular location is the cytoplasm. It localises to the cytosol. The protein resides in the nucleus. It is found in the secreted. The protein localises to the extracellular exosome. Functionally, ATP-independent molecular chaperone preventing the aggregation of misfolded and hydrophobic patches-containing proteins. Functions as part of a cytosolic protein quality control complex, the BAG6/BAT3 complex, which maintains these client proteins in a soluble state and participates in their proper delivery to the endoplasmic reticulum or alternatively can promote their sorting to the proteasome where they undergo degradation. The BAG6/BAT3 complex is involved in the post-translational delivery of tail-anchored/type II transmembrane proteins to the endoplasmic reticulum membrane. Recruited to ribosomes, it interacts with the transmembrane region of newly synthesized tail-anchored proteins and together with SGTA and ASNA1 mediates their delivery to the endoplasmic reticulum. Client proteins that cannot be properly delivered to the endoplasmic reticulum are ubiquitinated by RNF126, an E3 ubiquitin-protein ligase associated with BAG6 and are sorted to the proteasome. SGTA which prevents the recruitment of RNF126 to BAG6 may negatively regulate the ubiquitination and the proteasomal degradation of client proteins. Similarly, the BAG6/BAT3 complex also functions as a sorting platform for proteins of the secretory pathway that are mislocalized to the cytosol either delivering them to the proteasome for degradation or to the endoplasmic reticulum. The BAG6/BAT3 complex also plays a role in the endoplasmic reticulum-associated degradation (ERAD), a quality control mechanism that eliminates unwanted proteins of the endoplasmic reticulum through their retrotranslocation to the cytosol and their targeting to the proteasome. It maintains these retrotranslocated proteins in an unfolded yet soluble state condition in the cytosol to ensure their proper delivery to the proteasome. BAG6 is also required for selective ubiquitin-mediated degradation of defective nascent chain polypeptides by the proteasome. In this context, it may participate in the production of antigenic peptides and play a role in antigen presentation in immune response. BAG6 is also involved in endoplasmic reticulum stress-induced pre-emptive quality control, a mechanism that selectively attenuates the translocation of newly synthesized proteins into the endoplasmic reticulum and reroutes them to the cytosol for proteasomal degradation. BAG6 may ensure the proper degradation of these proteins and thereby protects the endoplasmic reticulum from protein overload upon stress. By inhibiting the polyubiquitination and subsequent proteasomal degradation of HSPA2 it may also play a role in the assembly of the synaptonemal complex during spermatogenesis. Also positively regulates apoptosis by interacting with and stabilizing the proapoptotic factor AIFM1. By controlling the steady-state expression of the IGF1R receptor, indirectly regulates the insulin-like growth factor receptor signaling pathway. Involved in DNA damage-induced apoptosis: following DNA damage, accumulates in the nucleus and forms a complex with p300/EP300, enhancing p300/EP300-mediated p53/TP53 acetylation leading to increase p53/TP53 transcriptional activity. When nuclear, may also act as a component of some chromatin regulator complex that regulates histone 3 'Lys-4' dimethylation (H3K4me2). In terms of biological role, released extracellularly via exosomes, it is a ligand of the natural killer/NK cells receptor NCR3 and stimulates NK cells cytotoxicity. It may thereby trigger NK cells cytotoxicity against neighboring tumor cells and immature myeloid dendritic cells (DC). Its function is as follows. May mediate ricin-induced apoptosis. The sequence is that of Large proline-rich protein BAG6 from Rattus norvegicus (Rat).